Reading from the N-terminus, the 261-residue chain is Cytochrome c oxidase subunit 2 (261 aa).

Residues 1 to 34 (MSFTGIFHFFTNSPCDAAEPWQLGSQDAATPMMQ) are Mitochondrial intermembrane-facing. The helical transmembrane segment at 35 to 55 (GIIDLHHDIFFFLILILVFVS) threads the bilayer. Over 56 to 87 (RILVRALWHFHSKKNPIPQRIVHGTTIEILRT) the chain is Mitochondrial matrix. A helical membrane pass occupies residues 88 to 108 (IFPSIIPMFIAIPSFALLYSM). The Mitochondrial intermembrane segment spans residues 109–261 (DEVVVDPAMT…NQLIPQTGEA (153 aa)). Positions 188, 223, 225, 227, and 231 each coordinate Cu cation. Residue glutamate 225 participates in Mg(2+) binding.

This sequence belongs to the cytochrome c oxidase subunit 2 family. In terms of assembly, component of the cytochrome c oxidase (complex IV, CIV), a multisubunit enzyme composed of a catalytic core of 3 subunits and several supernumerary subunits. The complex exists as a monomer or a dimer and forms supercomplexes (SCs) in the inner mitochondrial membrane with ubiquinol-cytochrome c oxidoreductase (cytochrome b-c1 complex, complex III, CIII). It depends on Cu cation as a cofactor.

It is found in the mitochondrion inner membrane. The catalysed reaction is 4 Fe(II)-[cytochrome c] + O2 + 8 H(+)(in) = 4 Fe(III)-[cytochrome c] + 2 H2O + 4 H(+)(out). Component of the cytochrome c oxidase, the last enzyme in the mitochondrial electron transport chain which drives oxidative phosphorylation. The respiratory chain contains 3 multisubunit complexes succinate dehydrogenase (complex II, CII), ubiquinol-cytochrome c oxidoreductase (cytochrome b-c1 complex, complex III, CIII) and cytochrome c oxidase (complex IV, CIV), that cooperate to transfer electrons derived from NADH and succinate to molecular oxygen, creating an electrochemical gradient over the inner membrane that drives transmembrane transport and the ATP synthase. Cytochrome c oxidase is the component of the respiratory chain that catalyzes the reduction of oxygen to water. Electrons originating from reduced cytochrome c in the intermembrane space (IMS) are transferred via the dinuclear copper A center (CU(A)) of subunit 2 and heme A of subunit 1 to the active site in subunit 1, a binuclear center (BNC) formed by heme A3 and copper B (CU(B)). The BNC reduces molecular oxygen to 2 water molecules using 4 electrons from cytochrome c in the IMS and 4 protons from the mitochondrial matrix. In Daucus carota (Wild carrot), this protein is Cytochrome c oxidase subunit 2 (COX2).